The primary structure comprises 213 residues: Protein-L-isoaspartate O-methyltransferase (213 aa).

S60 is an active-site residue.

This sequence belongs to the methyltransferase superfamily. L-isoaspartyl/D-aspartyl protein methyltransferase family.

The protein localises to the cytoplasm. It catalyses the reaction [protein]-L-isoaspartate + S-adenosyl-L-methionine = [protein]-L-isoaspartate alpha-methyl ester + S-adenosyl-L-homocysteine. Catalyzes the methyl esterification of L-isoaspartyl residues in peptides and proteins that result from spontaneous decomposition of normal L-aspartyl and L-asparaginyl residues. It plays a role in the repair and/or degradation of damaged proteins. The polypeptide is Protein-L-isoaspartate O-methyltransferase (Roseobacter denitrificans (strain ATCC 33942 / OCh 114) (Erythrobacter sp. (strain OCh 114))).